The primary structure comprises 64 residues: MKTSLSSLQRGLSEIFAFAYRNYALTKNEFYAIFEMLFWPLVSLISVGLLGEFLYLDREAVASY.

Residues 30–52 traverse the membrane as a helical segment; the sequence is FYAIFEMLFWPLVSLISVGLLGE.

Its subcellular location is the membrane. This is an uncharacterized protein from Archaeoglobus fulgidus (strain ATCC 49558 / DSM 4304 / JCM 9628 / NBRC 100126 / VC-16).